A 259-amino-acid chain; its full sequence is Ribonuclease HII (259 aa).

Residues 1-26 are disordered; sequence MLSTPPKLPSAHGPVHFPRRSGTGMN. The RNase H type-2 domain maps to 55 to 243; sequence APVAGADEAG…VRAQQLVLFE (189 aa). Positions 61, 62, and 152 each coordinate a divalent metal cation.

Belongs to the RNase HII family. The cofactor is Mn(2+). Mg(2+) is required as a cofactor.

The protein localises to the cytoplasm. The enzyme catalyses Endonucleolytic cleavage to 5'-phosphomonoester.. Endonuclease that specifically degrades the RNA of RNA-DNA hybrids. This Azorhizobium caulinodans (strain ATCC 43989 / DSM 5975 / JCM 20966 / LMG 6465 / NBRC 14845 / NCIMB 13405 / ORS 571) protein is Ribonuclease HII.